Reading from the N-terminus, the 371-residue chain is ETS-related transcription factor Elf-3 (371 aa).

A PNT domain is found at 46-132 (NPQMSLEGTE…AQLRDLTSSS (87 aa)). The 9aaTAD motif lies at 137-145 (SWIIELLEK). The tract at residues 173–251 (GQQASPYHPG…HGKRKRGRPR (79 aa)) is disordered. Low complexity predominate over residues 181–216 (PGSCGAGAPSPGSSDVSTAGTGASRSSHSSDSGGSD). A compositionally biased stretch (basic and acidic residues) spans 231–241 (GFRDCKKGDPK). The segment covering 242–251 (HGKRKRGRPR) has biased composition (basic residues). Positions 273 to 355 (THLWEFIRDI…DGRRLVYKFG (83 aa)) form a DNA-binding region, ETS.

This sequence belongs to the ETS family. As to quaternary structure, interacts with TBP. Interacts with CREBBP and EP300; these act as transcriptional coactivators of ELF3 and positively modulate its function. Interacts with XRCC5/KU86 and XRCC6/KU70; these inhibit the ability of ELF3 to bind DNA and negatively modulate its transcriptional activity. Associated with CLND7 and POU2F3. Interacts with ZNF768. Expressed exclusively in tissues containing a high content of terminally differentiated epithelial cells including mammary gland, colon, trachea, kidney, prostate, uterus, stomach and skin.

The protein localises to the cytoplasm. The protein resides in the nucleus. In terms of biological role, transcriptional activator that binds and transactivates ETS sequences containing the consensus nucleotide core sequence GGA[AT]. Acts synergistically with POU2F3 to transactivate the SPRR2A promoter and with RUNX1 to transactivate the ANGPT1 promoter. Also transactivates collagenase, CCL20, CLND7, FLG, KRT8, NOS2, PTGS2, SPRR2B, TGFBR2 and TGM3 promoters. Represses KRT4 promoter activity. Involved in mediating vascular inflammation. May play an important role in epithelial cell differentiation and tumorigenesis. May be a critical downstream effector of the ERBB2 signaling pathway. May be associated with mammary gland development and involution. Plays an important role in the regulation of transcription with TATA-less promoters in preimplantation embryos, which is essential in preimplantation development. This is ETS-related transcription factor Elf-3 from Homo sapiens (Human).